We begin with the raw amino-acid sequence, 585 residues long: DNA mismatch repair protein MutL (585 aa).

It belongs to the DNA mismatch repair MutL/HexB family.

Functionally, this protein is involved in the repair of mismatches in DNA. It is required for dam-dependent methyl-directed DNA mismatch repair. May act as a 'molecular matchmaker', a protein that promotes the formation of a stable complex between two or more DNA-binding proteins in an ATP-dependent manner without itself being part of a final effector complex. This chain is DNA mismatch repair protein MutL, found in Methanoculleus marisnigri (strain ATCC 35101 / DSM 1498 / JR1).